A 737-amino-acid chain; its full sequence is DNA topoisomerase 4 subunit A (737 aa).

One can recognise a Topo IIA-type catalytic domain in the interval 32–496 (LPDVRDGLKP…SFEEVTLTNQ (465 aa)). Residue Tyr-120 is the O-(5'-phospho-DNA)-tyrosine intermediate of the active site.

The protein belongs to the type II topoisomerase GyrA/ParC subunit family. ParC type 1 subfamily. As to quaternary structure, heterotetramer composed of ParC and ParE.

The protein localises to the cell membrane. The enzyme catalyses ATP-dependent breakage, passage and rejoining of double-stranded DNA.. Functionally, topoisomerase IV is essential for chromosome segregation. It relaxes supercoiled DNA. Performs the decatenation events required during the replication of a circular DNA molecule. In Rickettsia felis (strain ATCC VR-1525 / URRWXCal2) (Rickettsia azadi), this protein is DNA topoisomerase 4 subunit A.